A 361-amino-acid polypeptide reads, in one-letter code: Aminomethyltransferase (361 aa).

Belongs to the GcvT family. In terms of assembly, the glycine cleavage system is composed of four proteins: P, T, L and H.

It carries out the reaction N(6)-[(R)-S(8)-aminomethyldihydrolipoyl]-L-lysyl-[protein] + (6S)-5,6,7,8-tetrahydrofolate = N(6)-[(R)-dihydrolipoyl]-L-lysyl-[protein] + (6R)-5,10-methylene-5,6,7,8-tetrahydrofolate + NH4(+). The glycine cleavage system catalyzes the degradation of glycine. The protein is Aminomethyltransferase of Bacteroides thetaiotaomicron (strain ATCC 29148 / DSM 2079 / JCM 5827 / CCUG 10774 / NCTC 10582 / VPI-5482 / E50).